The chain runs to 91 residues: MSSYRQTLFILIILIVIILFVNEGQGAPHHDKRHTACVLKIFKALNVMCNHEGDADVLRRTASDCCRESCSLTEMLASCTLTSSEESTRDI.

An N-terminal signal peptide occupies residues 1 to 26 (MSSYRQTLFILIILIVIILFVNEGQG). 3 disulfide bridges follow: cysteine 37/cysteine 66, cysteine 49/cysteine 79, and cysteine 65/cysteine 70.

This sequence belongs to the insulin family.

It localises to the secreted. This is Probable insulin-like peptide gamma-type 1 (ins-11) from Caenorhabditis elegans.